A 300-amino-acid chain; its full sequence is Transmembrane protein 158 (300 aa).

Residues Met1–Gly20 form the signal peptide. Asn75 carries N-linked (GlcNAc...) asparagine glycosylation. 2 helical membrane passes run Leu231–Phe251 and Val273–Val293.

The protein belongs to the TMEM158 family. Post-translationally, N-glycosylated.

The protein resides in the membrane. Functionally, receptor for brain injury-derived neurotrophic peptide (BINP), a synthetic 13-mer peptide. This is Transmembrane protein 158 (TMEM158) from Homo sapiens (Human).